Reading from the N-terminus, the 356-residue chain is S-adenosylmethionine:tRNA ribosyltransferase-isomerase (356 aa).

The protein belongs to the QueA family. In terms of assembly, monomer.

It localises to the cytoplasm. The catalysed reaction is 7-aminomethyl-7-carbaguanosine(34) in tRNA + S-adenosyl-L-methionine = epoxyqueuosine(34) in tRNA + adenine + L-methionine + 2 H(+). It participates in tRNA modification; tRNA-queuosine biosynthesis. Functionally, transfers and isomerizes the ribose moiety from AdoMet to the 7-aminomethyl group of 7-deazaguanine (preQ1-tRNA) to give epoxyqueuosine (oQ-tRNA). The chain is S-adenosylmethionine:tRNA ribosyltransferase-isomerase from Chromohalobacter salexigens (strain ATCC BAA-138 / DSM 3043 / CIP 106854 / NCIMB 13768 / 1H11).